We begin with the raw amino-acid sequence, 337 residues long: Glycerol-3-phosphate dehydrogenase [NAD(P)+] (337 aa).

NADPH-binding residues include Ser-17, Tyr-18, His-38, and Lys-112. Residues Lys-112, Gly-141, and Thr-143 each contribute to the sn-glycerol 3-phosphate site. NADPH is bound at residue Ala-145. 5 residues coordinate sn-glycerol 3-phosphate: Lys-197, Asp-250, Ser-260, Arg-261, and Asn-262. Lys-197 (proton acceptor) is an active-site residue. Residue Arg-261 participates in NADPH binding. Residues Val-285 and Glu-287 each coordinate NADPH.

It belongs to the NAD-dependent glycerol-3-phosphate dehydrogenase family.

It localises to the cytoplasm. It carries out the reaction sn-glycerol 3-phosphate + NAD(+) = dihydroxyacetone phosphate + NADH + H(+). The enzyme catalyses sn-glycerol 3-phosphate + NADP(+) = dihydroxyacetone phosphate + NADPH + H(+). The protein operates within membrane lipid metabolism; glycerophospholipid metabolism. Its function is as follows. Catalyzes the reduction of the glycolytic intermediate dihydroxyacetone phosphate (DHAP) to sn-glycerol 3-phosphate (G3P), the key precursor for phospholipid synthesis. The sequence is that of Glycerol-3-phosphate dehydrogenase [NAD(P)+] from Pasteurella multocida (strain Pm70).